Here is a 185-residue protein sequence, read N- to C-terminus: Inner membrane lipoprotein DcrB (185 aa).

The N-terminal stretch at 1 to 19 (MRNLVKYVGIGLLVMGLAA) is a signal peptide. Cysteine 20 is lipidated: N-palmitoyl cysteine. Cysteine 20 carries the S-diacylglycerol cysteine lipid modification.

The protein belongs to the DcrB family.

Its subcellular location is the cell membrane. In terms of biological role, plays a role in cell envelope biogenesis, maintenance of cell envelope integrity and membrane homeostasis. Essential for lipoprotein maturation under conditions where membrane fluidity may be altered. In Shigella flexneri, this protein is Inner membrane lipoprotein DcrB.